The primary structure comprises 324 residues: MYGQNVRNVSYYPPYGYNGYKQSGERMWRMSHSLPSGMDTDFTSSYPGPSAMNPRGRGGYNDFSGGGSAMGSMCNMAPAQSTNSLNSGGDGGGGDTQAVNGTNLIVNYLPQDMTDRELYALFRTCGPINTCRIMKDYKTGYSFGYAFVDFASEIDAQNAIKTVNGITVRNKRLKVSYARPGGESIKDTNLYVTNLPRTITDDELEKIFGKYGNIVQKNILRDKLTGRPRGVAFVRFNKREEAQEAISALNNVIPEGASQPLTVRLAEEHGKMKAHHFMNQLGMGPPAAPIPAAGPGYNNMVHRGRQNKMRNHKVHPYHNPQKFI.

RRM domains follow at residues 102-180 (TNLI…YARP) and 188-268 (TNLY…LAEE).

Expressed in somatic cells of both sexes throughout development, but not in the pole cells which are the progenitors of the germline.

It is found in the nucleus. Its function is as follows. Unknown; apparently not involved in somatic sex determination. This Musca domestica (House fly) protein is Sex-lethal homolog (SXL).